We begin with the raw amino-acid sequence, 328 residues long: D-cysteine desulfhydrase (328 aa).

At K51 the chain carries N6-(pyridoxal phosphate)lysine.

This sequence belongs to the ACC deaminase/D-cysteine desulfhydrase family. Homodimer. The cofactor is pyridoxal 5'-phosphate.

It carries out the reaction D-cysteine + H2O = hydrogen sulfide + pyruvate + NH4(+) + H(+). Catalyzes the alpha,beta-elimination reaction of D-cysteine and of several D-cysteine derivatives. It could be a defense mechanism against D-cysteine. The sequence is that of D-cysteine desulfhydrase from Escherichia coli O7:K1 (strain IAI39 / ExPEC).